We begin with the raw amino-acid sequence, 124 residues long: Small ribosomal subunit protein bS6 (124 aa).

The interval 99-124 (PLPAPRIVPGSEPEPVEQQEAAAVEA) is disordered. Over residues 114-124 (VEQQEAAAVEA) the composition is skewed to low complexity.

It belongs to the bacterial ribosomal protein bS6 family.

Functionally, binds together with bS18 to 16S ribosomal RNA. The polypeptide is Small ribosomal subunit protein bS6 (Prochlorococcus marinus (strain MIT 9303)).